An 841-amino-acid chain; its full sequence is Probable alpha-glucuronidase A (841 aa).

The N-terminal stretch at 1–20 is a signal peptide; the sequence is MRGLNLFQLILALLLSMVAA. Residues Asn51, Asn76, Asn85, Asn149, Asn222, Asn279, Asn310, Asn343, Asn450, Asn465, Asn527, Asn576, Asn682, Asn723, and Asn732 are each glycosylated (N-linked (GlcNAc...) asparagine).

This sequence belongs to the glycosyl hydrolase 67 family.

The protein localises to the secreted. The enzyme catalyses an alpha-D-glucuronoside + H2O = D-glucuronate + an alcohol. Alpha-glucuronidase involved in the hydrolysis of xylan, a major structural heterogeneous polysaccharide found in plant biomass representing the second most abundant polysaccharide in the biosphere, after cellulose. Releases 4-O-methylglucuronic acid from xylan. This chain is Probable alpha-glucuronidase A (aguA), found in Aspergillus niger (strain ATCC MYA-4892 / CBS 513.88 / FGSC A1513).